Reading from the N-terminus, the 187-residue chain is Adenylate kinase (187 aa).

10 to 15 (GSGKGT) contacts ATP. The tract at residues 30–59 (STGDMLRAEIAAGSELGKQAKAVMDAGNLV) is NMP. Residues Thr31, Arg36, 57–59 (NLV), 85–88 (GYPR), and Gln92 contribute to the AMP site. The LID stretch occupies residues 126–136 (GRAKEQGRADD). Arg127 lines the ATP pocket. Positions 133 and 144 each coordinate AMP. Gly172 contributes to the ATP binding site.

The protein belongs to the adenylate kinase family. As to quaternary structure, monomer.

It localises to the cytoplasm. It catalyses the reaction AMP + ATP = 2 ADP. The protein operates within purine metabolism; AMP biosynthesis via salvage pathway; AMP from ADP: step 1/1. Its function is as follows. Catalyzes the reversible transfer of the terminal phosphate group between ATP and AMP. Plays an important role in cellular energy homeostasis and in adenine nucleotide metabolism. The sequence is that of Adenylate kinase from Stenotrophomonas maltophilia (strain R551-3).